We begin with the raw amino-acid sequence, 122 residues long: Large ribosomal subunit protein uL18 (122 aa).

It belongs to the universal ribosomal protein uL18 family. In terms of assembly, part of the 50S ribosomal subunit; part of the 5S rRNA/L5/L18/L25 subcomplex. Contacts the 5S and 23S rRNAs.

Functionally, this is one of the proteins that bind and probably mediate the attachment of the 5S RNA into the large ribosomal subunit, where it forms part of the central protuberance. The chain is Large ribosomal subunit protein uL18 from Kosmotoga olearia (strain ATCC BAA-1733 / DSM 21960 / TBF 19.5.1).